The following is a 293-amino-acid chain: 4-hydroxy-tetrahydrodipicolinate synthase (293 aa).

Pyruvate is bound at residue T46. Catalysis depends on Y133, which acts as the Proton donor/acceptor. K161 functions as the Schiff-base intermediate with substrate in the catalytic mechanism. A pyruvate-binding site is contributed by V202.

It belongs to the DapA family. Homotetramer; dimer of dimers.

The protein resides in the cytoplasm. It catalyses the reaction L-aspartate 4-semialdehyde + pyruvate = (2S,4S)-4-hydroxy-2,3,4,5-tetrahydrodipicolinate + H2O + H(+). It participates in amino-acid biosynthesis; L-lysine biosynthesis via DAP pathway; (S)-tetrahydrodipicolinate from L-aspartate: step 3/4. Functionally, catalyzes the condensation of (S)-aspartate-beta-semialdehyde [(S)-ASA] and pyruvate to 4-hydroxy-tetrahydrodipicolinate (HTPA). The chain is 4-hydroxy-tetrahydrodipicolinate synthase from Wolbachia pipientis wMel.